The chain runs to 351 residues: Auxin-responsive protein IAA27 (351 aa).

Positions Met1 to Lys37 are disordered. Positions Ser21–Asn34 are enriched in low complexity. The 95-residue stretch at Asn233–Asn327 folds into the PB1 domain.

This sequence belongs to the Aux/IAA family. Homodimers and heterodimers. As to expression, expressed in roots and seedlings.

It is found in the nucleus. In terms of biological role, aux/IAA proteins are short-lived transcriptional factors that function as repressors of early auxin response genes at low auxin concentrations. This chain is Auxin-responsive protein IAA27 (IAA27), found in Oryza sativa subsp. japonica (Rice).